Here is a 127-residue protein sequence, read N- to C-terminus: PRA1 family protein C (127 aa).

3 helical membrane-spanning segments follow: residues 15–35 (IFISMLWQPVHLSVFVILIVA), 53–73 (VIDDSTLVLVLLVLTIGIFLL), and 76–96 (VSRGIVIGVLAGLPVVLVHGM).

Belongs to the PRA1 family.

Its subcellular location is the endoplasmic reticulum membrane. Its function is as follows. May be involved in both secretory and endocytic intracellular trafficking in the endosomal/prevacuolar compartments. The protein is PRA1 family protein C (PRA1C) of Arabidopsis thaliana (Mouse-ear cress).